The sequence spans 384 residues: MEMDLSKVTLDIFTKLEQKWLSHCDSSRKTRILSIDGGGTTGIVAAASILHLEHQIRLQTGDPHAHISDFFDIVAGTGIGGILAALLVADDGSGRPMFTARDAVKFVAEKNSELFEIRYTGVFRRNKRYSGKSMERVLETAFRREDGKVLTMKDTCKPLLVPCYDLKTSAPFVFSRAGASESPSFDFELWKVCRATSATPSLFKPFSVVSVDGKTSCSAVDGGLVMNNPTAAAVTHVLHNKRDFPSVNGVDDLLVLSLGNGPSTMSSSPGRKLRRNGDYSTSSVVDIVVDGVSDTVDQMLGNAFCWNRTDYVRIQANGLTSGGAEELLKERGVETAPFGVKRILTESNGERIEGFVQRLVASGKSSLPPSPCKESAVNPLADGR.

Residues Leu33 to Val234 enclose the PNPLA domain. The short motif at Gly37–Gly42 is the GXGXXG element. Asp221 (proton acceptor) is an active-site residue. Positions Asp221 to Gly223 match the DGA/G motif. Residues Gly363–Arg384 form a disordered region.

The protein belongs to the patatin family. In terms of tissue distribution, highly expressed in roots and at lower levels in flowers and siliques.

The polypeptide is Probable inactive patatin-like protein 9 (PLP9) (Arabidopsis thaliana (Mouse-ear cress)).